The sequence spans 745 residues: Probable xanthine dehydrogenase subunit D (745 aa).

Mo-molybdopterin contacts are provided by Gln204, Phe235, and Ala508.

The protein belongs to the xanthine dehydrogenase family. As to quaternary structure, could be composed of four subunits: PucA, PucC, PucD and PucE. The cofactor is Mo-molybdopterin.

The catalysed reaction is xanthine + NAD(+) + H2O = urate + NADH + H(+). The enzyme catalyses hypoxanthine + NAD(+) + H2O = xanthine + NADH + H(+). It functions in the pathway purine metabolism; hypoxanthine degradation; urate from hypoxanthine: step 1/2. It participates in purine metabolism; hypoxanthine degradation; urate from hypoxanthine: step 2/2. Functionally, oxidizes hypoxanthine and xanthine to uric acid. The chain is Probable xanthine dehydrogenase subunit D (pucD) from Bacillus subtilis (strain 168).